Consider the following 230-residue polypeptide: Large ribosomal subunit protein uL1 (230 aa).

The protein belongs to the universal ribosomal protein uL1 family. Part of the 50S ribosomal subunit.

Functionally, binds directly to 23S rRNA. The L1 stalk is quite mobile in the ribosome, and is involved in E site tRNA release. Protein L1 is also a translational repressor protein, it controls the translation of the L11 operon by binding to its mRNA. The polypeptide is Large ribosomal subunit protein uL1 (Erythrobacter litoralis (strain HTCC2594)).